Here is an 88-residue protein sequence, read N- to C-terminus: Small ribosomal subunit protein uS15 (88 aa).

It belongs to the universal ribosomal protein uS15 family. Part of the 30S ribosomal subunit. Forms a bridge to the 50S subunit in the 70S ribosome, contacting the 23S rRNA.

Its function is as follows. One of the primary rRNA binding proteins, it binds directly to 16S rRNA where it helps nucleate assembly of the platform of the 30S subunit by binding and bridging several RNA helices of the 16S rRNA. Forms an intersubunit bridge (bridge B4) with the 23S rRNA of the 50S subunit in the ribosome. This Mycoplasmopsis synoviae (strain 53) (Mycoplasma synoviae) protein is Small ribosomal subunit protein uS15.